The sequence spans 86 residues: Small ribosomal subunit protein uS17 (86 aa).

This sequence belongs to the universal ribosomal protein uS17 family. As to quaternary structure, part of the 30S ribosomal subunit.

One of the primary rRNA binding proteins, it binds specifically to the 5'-end of 16S ribosomal RNA. This Exiguobacterium sp. (strain ATCC BAA-1283 / AT1b) protein is Small ribosomal subunit protein uS17.